The following is a 205-amino-acid chain: Thymidylate kinase (205 aa).

Residue 11–18 coordinates ATP; it reads GVEGAGKS.

Belongs to the thymidylate kinase family.

It catalyses the reaction dTMP + ATP = dTDP + ADP. Phosphorylation of dTMP to form dTDP in both de novo and salvage pathways of dTTP synthesis. This chain is Thymidylate kinase, found in Vesicomyosocius okutanii subsp. Calyptogena okutanii (strain HA).